The following is a 444-amino-acid chain: MITLRKVPLALAIAAGILSAQAGAVDFKGYARSGIGWTGSGGEQQCFQATGAQSKYRLGNECETYAEIKLGQEVWKEGDKSFYFDTNVAYSVAQQNDWEATDPAFREANVQGKNLIDWLPGSTIWAGKRFYQRHDVHMIDFYYWDISGPGAGLENIDVGFGKLSLAATRSSEAGGSSSFASNSIYDYTTRTANDVFDVRLAQMEINPGGTLELGADYGRANERDGYYLVDGASKDGWMFTAEHTQSMLKGFNKFVLQYATDSMTSQGKGLSQGSSIGTSDNINYAMNNNGHLWRVLDHGAISLGDSWDLMYVGMYQDINLDSNNGTKWWTVGVRPMFKWTPIMSTLLEVGYDNVKSQETGDTNNQYKITLAQQWQAGDSIWSRPAIRVFATYAKWDEKWGYAPSGNNTKAGYNPGVAYSDTSLNSFSRGDNDEWSFGAQMEIWW.

Positions 1–24 are cleaved as a signal peptide; that stretch reads MITLRKVPLALAIAAGILSAQAGA.

The protein belongs to the porin LamB (TC 1.B.3) family. In terms of assembly, homotrimer formed of three 18-stranded antiparallel beta-barrels, containing three independent channels.

It localises to the cell outer membrane. The catalysed reaction is beta-maltose(in) = beta-maltose(out). In terms of biological role, involved in the transport of maltose and maltodextrins. This chain is Maltoporin, found in Enterobacter sp. (strain 638).